The chain runs to 81 residues: Sulfur carrier protein TusA (81 aa).

The active-site Cysteine persulfide intermediate is cysteine 19.

The protein belongs to the sulfur carrier protein TusA family. In terms of assembly, interacts with IscS.

The protein resides in the cytoplasm. Its pathway is tRNA modification. Its function is as follows. Sulfur carrier protein involved in sulfur trafficking in the cell. Part of a sulfur-relay system required for 2-thiolation during synthesis of 2-thiouridine of the modified wobble base 5-methylaminomethyl-2-thiouridine (mnm(5)s(2)U) in tRNA. Interacts with IscS and stimulates its cysteine desulfurase activity. Accepts an activated sulfur from IscS, which is then transferred to TusD, and thus determines the direction of sulfur flow from IscS to 2-thiouridine formation. Also appears to be involved in sulfur transfer for the biosynthesis of molybdopterin. The polypeptide is Sulfur carrier protein TusA (Pectobacterium atrosepticum (strain SCRI 1043 / ATCC BAA-672) (Erwinia carotovora subsp. atroseptica)).